Reading from the N-terminus, the 139-residue chain is Putative pre-16S rRNA nuclease (139 aa).

Belongs to the YqgF nuclease family.

It is found in the cytoplasm. In terms of biological role, could be a nuclease involved in processing of the 5'-end of pre-16S rRNA. In Rippkaea orientalis (strain PCC 8801 / RF-1) (Cyanothece sp. (strain PCC 8801)), this protein is Putative pre-16S rRNA nuclease.